Here is a 161-residue protein sequence, read N- to C-terminus: Glutaredoxin-2, mitochondrial (161 aa).

The transit peptide at 1–19 (MLWRRAALAGTRLVWSRSG) directs the protein to the mitochondrion. A Phosphoserine modification is found at Ser20. The region spanning 54-154 (VNQIQETISD…PLVHQCYLKK (101 aa)) is the Glutaredoxin domain. Cys65 is a binding site for [2Fe-2S] cluster. Lys71 lines the glutathione pocket. S-glutathionyl cysteine; alternate is present on Cys74. Cys74 and Cys77 form a disulfide bridge. 2 residues coordinate glutathione: Gln106 and Val118. Cys150 serves as a coordination point for [2Fe-2S] cluster.

It belongs to the glutaredoxin family. In terms of assembly, monomer; active form. Homodimer; inactive form. The homodimer is probably linked by 1 2Fe-2S cluster.

Its subcellular location is the mitochondrion. The 2Fe-2S present in the homodimer leads to inactivation of the enzyme. The 2Fe-2S may serve as a redox sensor: the presence of one-electron oxidants or reductants leading to the loss of the 2Fe-2S cluster, subsequent monomerization and activation of the enzyme. Functionally, glutathione-dependent oxidoreductase that facilitates the maintenance of mitochondrial redox homeostasis upon induction of apoptosis by oxidative stress. Involved in response to hydrogen peroxide and regulation of apoptosis caused by oxidative stress. Acts as a very efficient catalyst of monothiol reactions because of its high affinity for protein glutathione-mixed disulfides. Can receive electrons not only from glutathione (GSH), but also from thioredoxin reductase supporting both monothiol and dithiol reactions. Efficiently catalyzes both glutathionylation and deglutathionylation of mitochondrial complex I, which in turn regulates the superoxide production by the complex. Overexpression decreases the susceptibility to apoptosis and prevents loss of cardiolipin and cytochrome c release. The chain is Glutaredoxin-2, mitochondrial (GLRX2) from Pongo abelii (Sumatran orangutan).